The sequence spans 342 residues: MESKRMEEPYFTFGIIADIQYADMDNRFNYLKTSMRYYRNSLTQLKAAVEEWAMESIKPAFILQLGDIIDGINTKDKSSKTALERVLVEMDKLPIQFHHVWGNHEFYNFSREYLNGSKLNSQARGDRIDRGGGTSENGEFNDESFYAYHFSPCPKFRFLLIDGYDLSPIGREKTSPKYDIALNLLKEKNPNEDLNSPTGLEEVQFVLFNGGISPSQLDWMERVLTSSDEKEENVFVVSHLPVHPDAADPMCLVWNYPEVLSVLQSHPCVVGYLAGHNHEGRYCMDPYGIHHLTFSGVIETPPESRAFGTMYVYEDKMVLKGRGLVEDRTLYYRDPKNKAERH.

Zn(2+)-binding residues include Asp-18, Gln-20, Asp-67, Asn-103, His-239, His-276, and His-278.

Belongs to the ADPRibase-Mn family. As to quaternary structure, monomer. The cofactor is Mg(2+).

It carries out the reaction CDP-choline + H2O = phosphocholine + CMP + 2 H(+). It catalyses the reaction ADP-D-ribose + H2O = D-ribose 5-phosphate + AMP + 2 H(+). The enzyme catalyses CDP-glycerol + H2O = sn-glycerol 3-phosphate + CMP + 2 H(+). In terms of biological role, hydrolyzes ADP-ribose, IDP-ribose, CDP-glycerol, CDP-choline and CDP-ethanolamine, but not other non-reducing ADP-sugars or CDP-glucose. The protein is Manganese-dependent ADP-ribose/CDP-alcohol diphosphatase (adprm) of Xenopus tropicalis (Western clawed frog).